We begin with the raw amino-acid sequence, 275 residues long: Dermonecrotic toxin LamSicTox-alphaIV1ii (275 aa).

H5 is a catalytic residue. Mg(2+)-binding residues include E25 and D27. H41 acts as the Nucleophile in catalysis. 2 cysteine pairs are disulfide-bonded: C45-C51 and C47-C192. D85 contributes to the Mg(2+) binding site.

This sequence belongs to the arthropod phospholipase D family. Class II subfamily. Requires Mg(2+) as cofactor. Expressed by the venom gland.

The protein resides in the secreted. The catalysed reaction is an N-(acyl)-sphingosylphosphocholine = an N-(acyl)-sphingosyl-1,3-cyclic phosphate + choline. The enzyme catalyses an N-(acyl)-sphingosylphosphoethanolamine = an N-(acyl)-sphingosyl-1,3-cyclic phosphate + ethanolamine. It carries out the reaction a 1-acyl-sn-glycero-3-phosphocholine = a 1-acyl-sn-glycero-2,3-cyclic phosphate + choline. It catalyses the reaction a 1-acyl-sn-glycero-3-phosphoethanolamine = a 1-acyl-sn-glycero-2,3-cyclic phosphate + ethanolamine. In terms of biological role, dermonecrotic toxins cleave the phosphodiester linkage between the phosphate and headgroup of certain phospholipids (sphingolipid and lysolipid substrates), forming an alcohol (often choline) and a cyclic phosphate. This toxin acts on sphingomyelin (SM). It may also act on ceramide phosphoethanolamine (CPE), lysophosphatidylcholine (LPC) and lysophosphatidylethanolamine (LPE), but not on lysophosphatidylserine (LPS), and lysophosphatidylglycerol (LPG). It acts by transphosphatidylation, releasing exclusively cyclic phosphate products as second products. Induces dermonecrosis, hemolysis, increased vascular permeability, edema, inflammatory response, and platelet aggregation. This Loxosceles amazonica (Recluse spider) protein is Dermonecrotic toxin LamSicTox-alphaIV1ii.